A 370-amino-acid polypeptide reads, in one-letter code: Serine/threonine-protein kinase RIM11/MSD1 (370 aa).

A Protein kinase domain is found at 39–322 (FPTTEVVGHG…ALQCLCSPYF (284 aa)). Residues 45 to 53 (VGHGSFGVV) and Lys68 contribute to the ATP site. The active-site Proton acceptor is Asp164. Tyr199 carries the phosphotyrosine modification.

This sequence belongs to the protein kinase superfamily. CMGC Ser/Thr protein kinase family. GSK-3 subfamily. As to quaternary structure, interacts with TDA1.

The catalysed reaction is L-seryl-[protein] + ATP = O-phospho-L-seryl-[protein] + ADP + H(+). It catalyses the reaction L-threonyl-[protein] + ATP = O-phospho-L-threonyl-[protein] + ADP + H(+). Its function is as follows. Serine/threonine protein kinase that is thought to function in regulating kinetochore activity and entry into meiosis. Could phosphorylate IME1. This Saccharomyces cerevisiae (strain ATCC 204508 / S288c) (Baker's yeast) protein is Serine/threonine-protein kinase RIM11/MSD1 (RIM11).